The primary structure comprises 351 residues: Biotin synthase (351 aa).

Residues 44–262 form the Radical SAM core domain; sequence NRVQVSTLLS…LAVARILMPQ (219 aa). [4Fe-4S] cluster-binding residues include cysteine 59, cysteine 63, and cysteine 66. Residues cysteine 103, cysteine 134, cysteine 194, and arginine 266 each coordinate [2Fe-2S] cluster.

This sequence belongs to the radical SAM superfamily. Biotin synthase family. In terms of assembly, homodimer. [4Fe-4S] cluster is required as a cofactor. It depends on [2Fe-2S] cluster as a cofactor.

It carries out the reaction (4R,5S)-dethiobiotin + (sulfur carrier)-SH + 2 reduced [2Fe-2S]-[ferredoxin] + 2 S-adenosyl-L-methionine = (sulfur carrier)-H + biotin + 2 5'-deoxyadenosine + 2 L-methionine + 2 oxidized [2Fe-2S]-[ferredoxin]. It functions in the pathway cofactor biosynthesis; biotin biosynthesis; biotin from 7,8-diaminononanoate: step 2/2. In terms of biological role, catalyzes the conversion of dethiobiotin (DTB) to biotin by the insertion of a sulfur atom into dethiobiotin via a radical-based mechanism. This chain is Biotin synthase, found in Pseudomonas fluorescens (strain ATCC BAA-477 / NRRL B-23932 / Pf-5).